The sequence spans 350 residues: Anthranilate phosphoribosyltransferase (350 aa).

5-phospho-alpha-D-ribose 1-diphosphate is bound by residues glycine 94, 97–98 (GS), threonine 102, 104–107 (NVST), 122–130 (KHGNRSVSS), and serine 134. Residue glycine 94 participates in anthranilate binding. A Mg(2+)-binding site is contributed by serine 106. Residue asparagine 125 coordinates anthranilate. Residue arginine 180 coordinates anthranilate. The Mg(2+) site is built by aspartate 239 and glutamate 240.

Belongs to the anthranilate phosphoribosyltransferase family. In terms of assembly, homodimer. The cofactor is Mg(2+).

It catalyses the reaction N-(5-phospho-beta-D-ribosyl)anthranilate + diphosphate = 5-phospho-alpha-D-ribose 1-diphosphate + anthranilate. Its pathway is amino-acid biosynthesis; L-tryptophan biosynthesis; L-tryptophan from chorismate: step 2/5. In terms of biological role, catalyzes the transfer of the phosphoribosyl group of 5-phosphorylribose-1-pyrophosphate (PRPP) to anthranilate to yield N-(5'-phosphoribosyl)-anthranilate (PRA). The protein is Anthranilate phosphoribosyltransferase of Geotalea uraniireducens (strain Rf4) (Geobacter uraniireducens).